Here is a 253-residue protein sequence, read N- to C-terminus: Proteasome subunit alpha type-7 (253 aa).

The protein belongs to the peptidase T1A family. As to quaternary structure, the 26S proteasome consists of a 20S proteasome core and two 19S regulatory subunits. The 20S proteasome core is composed of 28 subunits that are arranged in four stacked rings, resulting in a barrel-shaped structure. The two end rings are each formed by seven alpha subunits, and the two central rings are each formed by seven beta subunits. The catalytic chamber with the active sites is on the inside of the barrel.

It localises to the cytoplasm. It is found in the nucleus. In terms of biological role, the proteasome is a multicatalytic proteinase complex which is characterized by its ability to cleave peptides with Arg, Phe, Tyr, Leu, and Glu adjacent to the leaving group at neutral or slightly basic pH. The proteasome has an ATP-dependent proteolytic activity. The sequence is that of Proteasome subunit alpha type-7 (pas-4) from Caenorhabditis elegans.